The sequence spans 204 residues: Small ribosomal subunit protein uS4c (204 aa).

The S4 RNA-binding domain occupies M90 to I150.

Belongs to the universal ribosomal protein uS4 family. As to quaternary structure, part of the 30S ribosomal subunit. Contacts protein S5. The interaction surface between S4 and S5 is involved in control of translational fidelity.

The protein localises to the plastid. It localises to the chloroplast. Functionally, one of the primary rRNA binding proteins, it binds directly to 16S rRNA where it nucleates assembly of the body of the 30S subunit. Its function is as follows. With S5 and S12 plays an important role in translational accuracy. This Gnetum parvifolium (Small-leaved jointfir) protein is Small ribosomal subunit protein uS4c (rps4).